The sequence spans 75 residues: Protein Tlp homolog (75 aa).

The interval 48–75 is disordered; the sequence is KNQRRREALDGMREEIKDEARDKKNGYM.

The protein belongs to the Tlp family.

In Clostridium botulinum (strain 657 / Type Ba4), this protein is Protein Tlp homolog.